The following is a 401-amino-acid chain: S-adenosylmethionine synthase (401 aa).

137-142 (GEGSGD) contributes to the ATP binding site. A disordered region spans residues 272-305 (GTSAEQGDDGSVGRGNRSNGLITPNRSMSMEATS). The span at 287-305 (NRSNGLITPNRSMSMEATS) shows a compositional bias: polar residues.

Belongs to the AdoMet synthase 2 family. Mg(2+) serves as cofactor.

It carries out the reaction L-methionine + ATP + H2O = S-adenosyl-L-methionine + phosphate + diphosphate. The protein operates within amino-acid biosynthesis; S-adenosyl-L-methionine biosynthesis; S-adenosyl-L-methionine from L-methionine: step 1/1. Catalyzes the formation of S-adenosylmethionine from methionine and ATP. The protein is S-adenosylmethionine synthase of Natronomonas pharaonis (strain ATCC 35678 / DSM 2160 / CIP 103997 / JCM 8858 / NBRC 14720 / NCIMB 2260 / Gabara) (Halobacterium pharaonis).